Reading from the N-terminus, the 180-residue chain is Ribulose bisphosphate carboxylase small subunit, chloroplastic 2 (180 aa).

Residues 1–56 (MASSVMSSAAVATSTNAAQASMVAPFTGLKSAASFPVSRKQNLDITSIASNGGRVQ) constitute a chloroplast transit peptide.

The protein belongs to the RuBisCO small chain family. In terms of assembly, heterohexadecamer of 8 large and 8 small subunits.

Its subcellular location is the plastid. It is found in the chloroplast. In terms of biological role, ruBisCO catalyzes two reactions: the carboxylation of D-ribulose 1,5-bisphosphate, the primary event in carbon dioxide fixation, as well as the oxidative fragmentation of the pentose substrate. Both reactions occur simultaneously and in competition at the same active site. Although the small subunit is not catalytic it is essential for maximal activity. In Petunia hybrida (Petunia), this protein is Ribulose bisphosphate carboxylase small subunit, chloroplastic 2.